Reading from the N-terminus, the 649-residue chain is Phosphomethylpyrimidine synthase (649 aa).

Substrate is bound by residues asparagine 235, methionine 264, tyrosine 293, histidine 329, 349–351, 390–393, and glutamate 429; these read SRG and DGLR. Residue histidine 433 coordinates Zn(2+). Tyrosine 456 is a binding site for substrate. Position 497 (histidine 497) interacts with Zn(2+). Cysteine 577, cysteine 580, and cysteine 585 together coordinate [4Fe-4S] cluster. The interval 620–649 is disordered; that stretch reads GMRQKSQEFRDTGSELYHPAVGAKEAQLEE. Over residues 621–632 the composition is skewed to basic and acidic residues; the sequence is MRQKSQEFRDTG.

Belongs to the ThiC family. Homodimer. It depends on [4Fe-4S] cluster as a cofactor.

The catalysed reaction is 5-amino-1-(5-phospho-beta-D-ribosyl)imidazole + S-adenosyl-L-methionine = 4-amino-2-methyl-5-(phosphooxymethyl)pyrimidine + CO + 5'-deoxyadenosine + formate + L-methionine + 3 H(+). It functions in the pathway cofactor biosynthesis; thiamine diphosphate biosynthesis. Catalyzes the synthesis of the hydroxymethylpyrimidine phosphate (HMP-P) moiety of thiamine from aminoimidazole ribotide (AIR) in a radical S-adenosyl-L-methionine (SAM)-dependent reaction. The chain is Phosphomethylpyrimidine synthase from Vibrio atlanticus (strain LGP32) (Vibrio splendidus (strain Mel32)).